A 79-amino-acid polypeptide reads, in one-letter code: SLTKTXXTIIXAMWAKRLFTSYPQTKTYFPHFDLHPDSAQLRKNIDNIHSALSKLSELHAYILRVDPVNFKLLSHXFLV.

Serine 1 carries the post-translational modification N-acetylserine. The region spanning 1 to 79 is the Globin domain; sequence SLTKTXXTII…FKLLSHXFLV (79 aa). Phosphoserine occurs at positions 38 and 53. Position 59 (histidine 59) interacts with heme b.

It belongs to the globin family. In terms of assembly, heterotetramer of two zeta chains and two epsilon chains.

In terms of biological role, the zeta chain is an alpha-type chain of mammalian embryonic hemoglobin. This Notamacropus eugenii (Tammar wallaby) protein is Hemoglobin subunit zeta.